A 493-amino-acid polypeptide reads, in one-letter code: Glycerol kinase (493 aa).

Thr-11 lines the ADP pocket. Residues Thr-11, Thr-12, and Ser-13 each coordinate ATP. Thr-11 contacts sn-glycerol 3-phosphate. Arg-15 provides a ligand contact to ADP. Residues Arg-80, Glu-81, Tyr-132, and Asp-241 each coordinate sn-glycerol 3-phosphate. The glycerol site is built by Arg-80, Glu-81, Tyr-132, Asp-241, and Gln-242. ADP-binding residues include Thr-263 and Gly-306. ATP is bound by residues Thr-263, Gly-306, Gln-310, and Gly-408. Gly-408 lines the ADP pocket.

The protein belongs to the FGGY kinase family.

The catalysed reaction is glycerol + ATP = sn-glycerol 3-phosphate + ADP + H(+). It functions in the pathway polyol metabolism; glycerol degradation via glycerol kinase pathway; sn-glycerol 3-phosphate from glycerol: step 1/1. Its activity is regulated as follows. Inhibited by fructose 1,6-bisphosphate (FBP). Key enzyme in the regulation of glycerol uptake and metabolism. Catalyzes the phosphorylation of glycerol to yield sn-glycerol 3-phosphate. The chain is Glycerol kinase from Cereibacter sphaeroides (strain KD131 / KCTC 12085) (Rhodobacter sphaeroides).